Reading from the N-terminus, the 141-residue chain is MISAHCSNLHFLGSSESPTLASQVGEITGTHHHTRLIFVFLVETGFHHVGHAGLELLTSSDPPTLASRSAGITGMSHRARPHGISRGEQVTLGLPLELLECVSWPLCGSPLRRAQIVSTPPSPLAALRVPVGAEGWGGTEQ.

This is an uncharacterized protein from Homo sapiens (Human).